The primary structure comprises 580 residues: Myb-like protein C (580 aa).

Disordered regions lie at residues methionine 1–asparagine 58, glutamine 73–serine 101, asparagine 121–asparagine 203, and serine 354–asparagine 380. Composition is skewed to low complexity over residues asparagine 20–asparagine 47, asparagine 87–serine 101, and proline 126–asparagine 203. Residues lysine 361–valine 371 are compositionally biased toward basic residues. HTH myb-type domains lie at arginine 368 to isoleucine 430 and arginine 431 to valine 482. 2 consecutive DNA-binding regions (H-T-H motif) follow at residues tryptophan 402–leucine 426 and tryptophan 454–methionine 478. In terms of domain architecture, Myb-like spans tryptophan 484 to asparagine 546.

The protein resides in the nucleus. Functionally, transcription activator required for the culmination, at the time of the fruiting body formation. Regulates genes involved in the cell differentiation within the fruiting body. The protein is Myb-like protein C (mybC) of Dictyostelium discoideum (Social amoeba).